Consider the following 859-residue polypeptide: Envelope glycoprotein (859 aa).

Positions 1 to 6 are excised as a propeptide; that stretch reads MVSIAF. Residues 7–614 are Extracellular-facing; the sequence is YGGIPGGIST…KDLWSHIGNW (608 aa). N-linked (GlcNAc...) asparagine; by host glycans are attached at residues Asn40, Asn112, Asn141, Asn148, Asn186, Asn214, Asn233, Asn244, Asn340, Asn368, Asn399, Asn406, Asn411, and Asn422. Residues 446–466 form a fusion peptide region; sequence FGISAIVAAIVAATAIAASAT. Asn483 and Asn490 each carry an N-linked (GlcNAc...) asparagine; by host glycan. Residues 498–513 form an immunosuppression region; it reads LIERQIKILYAMILQT. 2 N-linked (GlcNAc...) asparagine; by host glycosylation sites follow: Asn550 and Asn557. 2 coiled-coil regions span residues 576–624 and 663–699; these read ILTT…SIIK and KKFHHKHASREDTWDQAQHSIHLAGVTGGSGDKYYKQ. A helical membrane pass occupies residues 615-635; the sequence is IPGLGASIIKYIVMFLLIYLL. Topologically, residues 636 to 859 are cytoplasmic; sequence LTSSPKILRA…TSHVSMPQYV (224 aa). A disordered region spans residues 745-764; sequence AAINEHKNGSGGNNPHQGSL.

As to quaternary structure, the mature envelope protein (Env) consists of a trimer of SU-TM heterodimers attached by noncovalent interactions or by a labile interchain disulfide bond. In terms of processing, specific enzymatic cleavages in vivo yield mature proteins. Envelope glycoproteins are synthesized as an inactive precursor that is N-glycosylated and processed likely by host cell furin or by a furin-like protease in the Golgi to yield the mature SU and TM proteins. The cleavage site between SU and TM requires the minimal sequence [KR]-X-[KR]-R.

It is found in the virion membrane. The protein resides in the host cell membrane. In terms of biological role, the surface protein (SU) attaches the virus to the host cell by binding to its receptor. This interaction triggers the refolding of the transmembrane protein (TM) and is thought to activate its fusogenic potential by unmasking its fusion peptide. Fusion occurs at the host cell plasma membrane. Functionally, the transmembrane protein (TM) acts as a class I viral fusion protein. Under the current model, the protein has at least 3 conformational states: pre-fusion native state, pre-hairpin intermediate state, and post-fusion hairpin state. During viral and target cell membrane fusion, the coiled coil regions (heptad repeats) assume a trimer-of-hairpins structure, positioning the fusion peptide in close proximity to the C-terminal region of the ectodomain. The formation of this structure appears to drive apposition and subsequent fusion of viral and target cell membranes. Membranes fusion leads to delivery of the nucleocapsid into the cytoplasm. The sequence is that of Envelope glycoprotein (env) from Equus asinus (Donkey).